Consider the following 227-residue polypeptide: Max dimerization protein 1 (227 aa).

The short motif at 21-48 (RREREAEHGYASMLPYSKDRDAFKRRNK) is the Nuclear localization signal element. Disordered stretches follow at residues 30–66 (YASM…MEKN), 142–161 (MDSV…REEL), and 184–227 (GWSS…GLGL). A bHLH domain is found at 55–107 (SSRSTHNEMEKNRRAHLRLCLEKLKGLVPLGPESSRHTTLSLLTKAKLHIKKL). Positions 198–211 (MQSLGSDEGYSSAT) are enriched in polar residues. The span at 216 to 227 (KLQDGHKAGLGL) shows a compositional bias: basic and acidic residues.

As to quaternary structure, heterodimer with MAX; the interaction is required for DNA-binding. DNA binding requires dimerization with another bHLH protein; does not form homodimers, and does not bind to DNA in the absence of MAX in vitro. Interacts with RNF17. Post-translationally, ubiquitinated by BIRC2/c-IAP1, leading to its subsequent degradation by the proteasome.

Its subcellular location is the nucleus. Functionally, component of a transcriptional repressor complex together with MAX. In complex with MAX binds to the core DNA sequence 5'-CAC[GA]TG-3'. Antagonizes MYC transcriptional activity by competing with MYC for MAX binding. Binds to the TERT promoter and represses telomerase expression, possibly by interfering with MYC binding. The protein is Max dimerization protein 1 (Mxd1) of Mus musculus (Mouse).